The sequence spans 951 residues: Coiled-coil domain-containing protein 15 (951 aa).

Coiled coils occupy residues 64–89, 154–193, 782–813, and 839–874; these read LIEEELKEQLRKKQEALKHFQKQVKY, DGIEDEENQNELFQQQAQALSETMKQARHRLASFKTVIKK, MDIEREQVKEQQRQKEQKKKIEKIKKKREQEC, and LAQLQLQEIKGTREKQQREKEYLRYVEALRAQIQEK.

Interacts with POC5, POC1B, CETN2 and FAM161A.

The protein resides in the cytoplasm. The protein localises to the cytoskeleton. Its subcellular location is the microtubule organizing center. It is found in the centrosome. It localises to the centriole. The protein resides in the centriolar satellite. Plays an important role in primary cilium assembly, maintenance, and length regulation. Interacts with centriole inner scaffold proteins to promote proper centriole size and integrity and assembly of functional cilia. Required for the recruitment of both the inner scaffold protein POC1B and the distal SFI1/CETN2 complex to centrioles. This is Coiled-coil domain-containing protein 15 (CCDC15) from Homo sapiens (Human).